The chain runs to 181 residues: Transcription termination/antitermination protein NusG (181 aa).

One can recognise a KOW domain in the interval 130–161; the sequence is PGEMIRVNDGPFADFNGVVEEVDYEKSRLKVS.

This sequence belongs to the NusG family. Monomer. Interacts with the transcription termination factor Rho and with RNA polymerase.

Functionally, participates in transcription elongation, termination and antitermination. In the absence of Rho, increases the rate of transcription elongation by the RNA polymerase (RNAP), probably by partially suppressing pausing. In the presence of Rho, modulates most Rho-dependent termination events by interacting with the RNAP to render the complex more susceptible to the termination activity of Rho. May be required to overcome a kinetic limitation of Rho to function at certain terminators. Also involved in ribosomal RNA transcriptional antitermination. This Buchnera aphidicola subsp. Acyrthosiphon pisum (strain APS) (Acyrthosiphon pisum symbiotic bacterium) protein is Transcription termination/antitermination protein NusG.